A 244-amino-acid chain; its full sequence is Cysteine-rich secretory protein 2 (244 aa).

Positions 1–21 (MALLPVVVFLITMLLPCVLTN) are cleaved as a signal peptide. Residues 43–170 (NKHNQLRKSV…SLKYYYVCQY (128 aa)) enclose the SCP domain. Disulfide bonds link Cys190-Cys197, Cys193-Cys202, Cys206-Cys239, Cys215-Cys233, and Cys224-Cys237. The 34-residue stretch at 206–239 (CEYEDLLSNCESLKNTAGCEHQLLVEKCKATCRC) folds into the ShKT domain.

Belongs to the CRISP family. As to quaternary structure, interacts with NSUN4 isoform 3. As to expression, testis.

Its subcellular location is the secreted. Functionally, may regulate some ion channels' activity and thereby regulate calcium fluxes during sperm capacitation. In Cavia porcellus (Guinea pig), this protein is Cysteine-rich secretory protein 2 (CRISP2).